We begin with the raw amino-acid sequence, 758 residues long: Spastin (758 aa).

A disordered region spans residues 1-103 (MVRTKNQSSS…SPRSGHHHSY (103 aa)). The Cytoplasmic segment spans residues 1 to 121 (MVRTKNQSSS…KQNLYVVSFP (121 aa)). Positions 1–159 (MVRTKNQSSS…VIYRPHRRDC (159 aa)) are interaction with atl. Residues 1–210 (MVRTKNQSSS…RPIQPLEMAA (210 aa)) are required for localization to punctate cytoplasmic foci. Composition is skewed to low complexity over residues 8-28 (SSSS…SSGA), 43-58 (RSSS…AGGS), 66-76 (SSNRRSPGSSP), and 85-95 (TDDLTPTTCSP). The helical intramembrane region spans 122-142 (IIFLFNVLRSLIYQLFCIFRY). Topologically, residues 143–758 (LYGASTKVIY…WSQDYGDITI (616 aa)) are cytoplasmic. Polar residues-rich tracts occupy residues 169–180 (SKEQQQSLNHPS) and 189–198 (QEQQLSNQPQ). Positions 169–202 (SKEQQQSLNHPSELNREGDGQEQQLSNQPQRFRP) are disordered. The tract at residues 208–758 (MAANRPGGGY…WSQDYGDITI (551 aa)) is sufficient for interaction with microtubules and microtubule severing. Positions 233-308 (HRRAFEYISK…SMARDRLHFL (76 aa)) constitute an MIT domain. Residues 353 to 454 (RVRSSGYGPK…GPSGSGASTP (102 aa)) are disordered. Composition is skewed to polar residues over residues 390-406 (NKSQ…TSVG) and 425-454 (QFSS…ASTP). A Phosphothreonine modification is found at Thr-439. The segment at 443-455 (NNGPSGSGASTPV) is required for interaction with microtubules. Residue 523-530 (GPPGNGKT) participates in ATP binding.

Belongs to the AAA ATPase family. Spastin subfamily. As to quaternary structure, homohexamer. The homohexamer is stabilized by ATP-binding. The homohexamer may adopt a ring conformation through which microtubules pass prior to being severed. Interacts with microtubules. Interacts with atl; may be involved in microtubule dynamics.

It is found in the membrane. It localises to the cytoplasm. Its subcellular location is the cytoskeleton. The protein localises to the microtubule organizing center. The protein resides in the centrosome. It is found in the chromosome. It localises to the lipid droplet. It carries out the reaction n ATP + n H2O + a microtubule = n ADP + n phosphate + (n+1) alpha/beta tubulin heterodimers.. ATP-dependent microtubule severing protein. Stimulates microtubule minus-end depolymerization and poleward microtubule flux in the mitotic spindle. Regulates microtubule stability in the neuromuscular junction synapse. Involved in lipid metabolism by regulating the size and distribution of lipid droplets. Involved in axon regeneration by regulating microtubule severing. The chain is Spastin from Drosophila melanogaster (Fruit fly).